The sequence spans 236 residues: 2,3,4,5-tetrahydropyridine-2,6-dicarboxylate N-acetyltransferase (236 aa).

This sequence belongs to the transferase hexapeptide repeat family. DapH subfamily.

The catalysed reaction is (S)-2,3,4,5-tetrahydrodipicolinate + acetyl-CoA + H2O = L-2-acetamido-6-oxoheptanedioate + CoA. Its pathway is amino-acid biosynthesis; L-lysine biosynthesis via DAP pathway; LL-2,6-diaminopimelate from (S)-tetrahydrodipicolinate (acetylase route): step 1/3. Its function is as follows. Catalyzes the transfer of an acetyl group from acetyl-CoA to tetrahydrodipicolinate. This is 2,3,4,5-tetrahydropyridine-2,6-dicarboxylate N-acetyltransferase from Listeria innocua serovar 6a (strain ATCC BAA-680 / CLIP 11262).